The sequence spans 411 residues: MELLQQWTQQAKAALTQARQLCGDAHKFNEDAKTDLRNSIKQHQQLKELAKLTASQCTRLDSSTALIKQLLDLVQNYPTFNQLNVLHDRLESSLKRLRDCTLDPALGSEYTNLYAFVDDTALEDLKTRLRGVTDGVWNAFEKLAGLLEEDLCANYHKRLEAVSLDFLPPAYNDTAEELADLLLQVAQHYDQCSEALNIYDTLSDAEKKDLQEVLQSDSNHVPSVLTELRSGLDQTIHYFNAVQSYKSKVDSATSILEALAEELNKNQLTNQRHEAAHELMRAQTGLEIPQLAQELVQLERHYTHFAKAYTALLQEIHRRQTYENCVRSIVDEFVGRLEKEQQAEAKCRIDFFNQYGDYLPQTLWGAVTDPPLHFEIIEHQYTELPNVKVIPDKNDKKSKQREKSSTTASKR.

The interval lysine 388–arginine 411 is disordered. Residues isoleucine 390 to serine 404 are compositionally biased toward basic and acidic residues.

This sequence belongs to the ATG17 family. In terms of assembly, homodimer. Component of the atg1 kinase complex composed of at least atg1, atg13, atg17 and atg101. Interacts directly with atg13.

It is found in the cytoplasm. The protein resides in the preautophagosomal structure membrane. In terms of biological role, autophagy-specific protein that functions in response to autophagy-inducing signals as a scaffold to recruit other ATG proteins to organize preautophagosomal structure (PAS) formation. Modulates the timing and magnitude of the autophagy response, such as the size of the sequestering vesicles. Plays particularly a role in pexophagy and nucleophagy. In Schizosaccharomyces pombe (strain 972 / ATCC 24843) (Fission yeast), this protein is Autophagy-related protein 17 (atg17).